The chain runs to 142 residues: MVLSAADKSNVKAAWGKVGSNAGAYGAEALERMFLSFPTTKTYFPHFDLSHGSAQVKGHGEKVAAALTKAVGHLDDLPGTLSDLSDLHAHKLRVDPVNFKLLSHSLLVTLACHHPSDFTPAVHASLDKFLANVSTVLTSKYR.

Residues 2–142 enclose the Globin domain; sequence VLSAADKSNV…VSTVLTSKYR (141 aa). Residue His59 coordinates O2. His88 serves as a coordination point for heme b.

The protein belongs to the globin family. In terms of assembly, heterotetramer of two alpha chains and two beta chains.

Its function is as follows. Involved in oxygen transport from the lung to the various peripheral tissues. Hemopressin acts as an antagonist peptide of the cannabinoid receptor CNR1. Hemopressin-binding efficiently blocks cannabinoid receptor CNR1 and subsequent signaling. The polypeptide is Hemoglobin subunit alpha-2 (HBA2) (Capra hircus (Goat)).